The primary structure comprises 306 residues: Acetyl-coenzyme A carboxylase carboxyl transferase subunit beta (306 aa).

Positions 27–296 (LWHKCPSCEA…PKFVAAPIEP (270 aa)) constitute a CoA carboxyltransferase N-terminal domain. Zn(2+) is bound by residues cysteine 31, cysteine 34, cysteine 50, and cysteine 53. A C4-type zinc finger spans residues 31–53 (CPSCEAVLYRPELEKTLDVCPKC).

This sequence belongs to the AccD/PCCB family. As to quaternary structure, acetyl-CoA carboxylase is a heterohexamer composed of biotin carboxyl carrier protein (AccB), biotin carboxylase (AccC) and two subunits each of ACCase subunit alpha (AccA) and ACCase subunit beta (AccD). Zn(2+) serves as cofactor.

The protein localises to the cytoplasm. The enzyme catalyses N(6)-carboxybiotinyl-L-lysyl-[protein] + acetyl-CoA = N(6)-biotinyl-L-lysyl-[protein] + malonyl-CoA. The protein operates within lipid metabolism; malonyl-CoA biosynthesis; malonyl-CoA from acetyl-CoA: step 1/1. In terms of biological role, component of the acetyl coenzyme A carboxylase (ACC) complex. Biotin carboxylase (BC) catalyzes the carboxylation of biotin on its carrier protein (BCCP) and then the CO(2) group is transferred by the transcarboxylase to acetyl-CoA to form malonyl-CoA. The polypeptide is Acetyl-coenzyme A carboxylase carboxyl transferase subunit beta (Pseudomonas fluorescens (strain Pf0-1)).